The following is a 59-amino-acid chain: Cuticle protein 7 isoform a (59 aa).

Gln-1 carries the post-translational modification Pyrrolidone carboxylic acid.

This is Cuticle protein 7 isoform a from Limulus polyphemus (Atlantic horseshoe crab).